Consider the following 391-residue polypeptide: Suppressor APC domain-containing protein 2 (391 aa).

The disordered stretch occupies residues methionine 1–serine 20. Position 218 is a phosphothreonine (threonine 218). A coiled-coil region spans residues serine 226 to aspartate 277. Serine 283 carries the post-translational modification Phosphoserine. Residues leucine 340–glutamine 381 are a coiled coil.

Interacts with a spindle orientation complex at least composed of GNAI1, GPSM2 and NUMA1. Interacts with GPSM2 (via TPR motifs); this interaction is required to prevent GPSM2 anchoring at the mitotic apical cortex and is inhibited in presence of NUMA1 in a dose dependent manner. Interacts with PARD3. As to expression, expressed in the retina. Expressed in retinal progenitor cells and newly differentiated neurons but not in mature retinal cells (at protein level).

It is found in the cytoplasm. It localises to the nucleus. The protein localises to the cell cortex. The protein resides in the apical cell membrane. Its subcellular location is the cell junction. It is found in the tight junction. Functionally, plays a role in planar mitotic spindle orientation in retinal progenitor cells (RPCs) and promotes the production of symmetric terminal divisions. Negatively regulates the mitotic apical cortex localization of GPSM2. Involved also in positive regulation of cell proliferation and tumor cell growth. This chain is Suppressor APC domain-containing protein 2, found in Mus musculus (Mouse).